A 388-amino-acid chain; its full sequence is Phosphoribosylformylglycinamidine cyclo-ligase, chloroplastic/mitochondrial (388 aa).

This sequence belongs to the AIR synthase family.

Its subcellular location is the plastid. It is found in the chloroplast. The protein resides in the mitochondrion. It carries out the reaction 2-formamido-N(1)-(5-O-phospho-beta-D-ribosyl)acetamidine + ATP = 5-amino-1-(5-phospho-beta-D-ribosyl)imidazole + ADP + phosphate + H(+). Its pathway is purine metabolism; IMP biosynthesis via de novo pathway; 5-amino-1-(5-phospho-D-ribosyl)imidazole from N(2)-formyl-N(1)-(5-phospho-D-ribosyl)glycinamide: step 2/2. This chain is Phosphoribosylformylglycinamidine cyclo-ligase, chloroplastic/mitochondrial (PUR5), found in Vigna unguiculata (Cowpea).